Consider the following 372-residue polypeptide: GDP-mannose transporter GONST3 (372 aa).

A run of 10 helical transmembrane segments spans residues 33–53 (ASVYGVAAGYCLSASLLSIIN), 60–80 (FPYPGALTAMQYFTSAAGVLL), 92–112 (LNLLTMWRFLPAAMIFYLSLF), 125–145 (TFIVFRSAVPIFVAIGETLFL), 155–175 (WGSLATIFGGSLLYVFTDYQF), 177–197 (IAAYSWALAYLVSMTIDFVYI), 209–229 (WGLVLYNNLEALLLFPLELLI), 251–271 (VVLPVGLSCLFGLAISFFGFS), 280–300 (GFTVLGIVNKLLTVVINLMVW), and 303–323 (HSTFVGTLGLLVCMFGGVMYQ). Residues 331 to 372 (NATQEAKPQEQDEEQEKLLEMQENKESNSVDIKETLKSEEKL) form a disordered region. Residues 346-372 (EKLLEMQENKESNSVDIKETLKSEEKL) show a composition bias toward basic and acidic residues.

It belongs to the nucleotide-sugar transporter family. GDP-Mannose:GMP antiporter (GMA) (TC 2.A.7.13) subfamily. In terms of tissue distribution, expressed in rosette leaves, stems, flowers and siliques.

It is found in the golgi apparatus membrane. Functionally, GDP-mannose transporter that may be involved in the import of GDP-mannose from the cytoplasm into the Golgi lumen. The protein is GDP-mannose transporter GONST3 of Arabidopsis thaliana (Mouse-ear cress).